The chain runs to 148 residues: Large ribosomal subunit protein bL9 (148 aa).

This sequence belongs to the bacterial ribosomal protein bL9 family.

In terms of biological role, binds to the 23S rRNA. This is Large ribosomal subunit protein bL9 from Pseudomonas putida (strain W619).